Reading from the N-terminus, the 246-residue chain is Trypsin-5 (246 aa).

Positions 1–15 (MNSLLFLALVGAAVA) are cleaved as a signal peptide. A propeptide spans 16–23 (FPVDDDDK) (activation peptide). A Peptidase S1 domain is found at 24–244 (IVGGYTCREN…YVDWIQDTIA (221 aa)). An intrachain disulfide couples Cys-48 to Cys-64. Catalysis depends on charge relay system residues His-63 and Asp-107. 3 cysteine pairs are disulfide-bonded: Cys-139–Cys-206, Cys-171–Cys-185, and Cys-196–Cys-220. The active-site Charge relay system is Ser-200.

It belongs to the peptidase S1 family. In terms of processing, proteolytically cleaved and activated by an autocatalytic mechanism. Cleavage by CTRC inhibits autoactivation. In terms of tissue distribution, expressed in the heart, lung, brain, kidney, liver, epididymis, ovary and uterus. Expression in the testis is limited to round and elongating spermatids.

The protein localises to the cytoplasmic vesicle. Its subcellular location is the secretory vesicle. The protein resides in the acrosome. The enzyme catalyses Preferential cleavage: Arg-|-Xaa, Lys-|-Xaa.. Activated by autocatalytic cleavage. Cleavage by CTRC inhibits autoactivation. In terms of biological role, serine protease capable of autoactivation. This chain is Trypsin-5, found in Mus musculus (Mouse).